Reading from the N-terminus, the 264-residue chain is Glutamate racemase (264 aa).

Substrate is bound by residues aspartate 10–serine 11 and tyrosine 42–glycine 43. Cysteine 73 functions as the Proton donor/acceptor in the catalytic mechanism. Asparagine 74 to threonine 75 contributes to the substrate binding site. The active-site Proton donor/acceptor is the cysteine 183. Substrate is bound at residue threonine 184–histidine 185.

Belongs to the aspartate/glutamate racemases family.

The catalysed reaction is L-glutamate = D-glutamate. Its pathway is cell wall biogenesis; peptidoglycan biosynthesis. Provides the (R)-glutamate required for cell wall biosynthesis. The sequence is that of Glutamate racemase from Streptococcus pyogenes serotype M18 (strain MGAS8232).